The following is a 236-amino-acid chain: Small ribosomal subunit protein uS2c (236 aa).

The protein belongs to the universal ribosomal protein uS2 family.

It is found in the plastid. Its subcellular location is the chloroplast. The polypeptide is Small ribosomal subunit protein uS2c (rps2) (Buxus microphylla (Littleleaf boxwood)).